We begin with the raw amino-acid sequence, 131 residues long: Protein TIFY 5A (131 aa).

The EAR signature appears at Leu-9–Leu-13. 2 disordered regions span residues Phe-14–Gln-44 and Arg-74–Arg-131. Residues Thr-16 to Ser-34 show a composition bias toward low complexity. Positions Pro-39 to Arg-74 constitute a Tify domain. Polar residues predominate over residues Lys-79–Pro-100. The Jas signature appears at Ser-105–Tyr-127. The short motif at Met-106 to Phe-113 is the Nuclear localization signal element. Residues Gln-122–Arg-131 are compositionally biased toward polar residues.

This sequence belongs to the TIFY/JAZ family. As to quaternary structure, interacts with TPL and weakly with COI1, but not with AFPH2/NINJA. Interacts with MYC2, MYB21, MYB24, TIFY10A/JAZ1, TIFY10B/JAZ2, TIFY6B/JAZ3, TIFY6A/JAZ4, TIFY11A/JAZ5, TIFY11B/JAZ6, TIFY7/JAZ9, TIFY9/JAZ10 and TIFY3B/JAZ12. Interacts with RHD6 and RSL1. (Microbial infection) Interacts with the pathogenic Pseudomonas syringae HopZ1a protein. (Microbial infection) Acetylated by Pseudomonas syringae HopZ1a. Post-translationally, ubiquitinated.

The protein resides in the nucleus. Functionally, repressor of jasmonate responses. Unable to associate strongly with COI1 in the presence of jasmonoyl-isoleucine (JA-Ile) and is therefore more resistant to JA-mediated-degradation than other TIFY/JAZ proteins. Repress gene expression through direct recruitment of the corepressor TOPLESS to cognate transcription factors. Interacts with and suppresses RHD6 and RSL1 transcription factor activities to negatively regulate jasmonate-stimulated root hair development. This chain is Protein TIFY 5A, found in Arabidopsis thaliana (Mouse-ear cress).